The chain runs to 109 residues: MKVLVLFSVLFLTLFSYSSTEAIDEFDSDAEDDMLSLMANEQVRAKACTPRLHDCSHDRHSCCRGELFKDVCYCFYPEGEDITEVCSCQQPKSHKYIEKVVDKAKTVVG.

Positions 1 to 22 (MKVLVLFSVLFLTLFSYSSTEA) are cleaved as a signal peptide. A propeptide spanning residues 23–44 (IDEFDSDAEDDMLSLMANEQVR) is cleaved from the precursor. The knottin domain stretch occupies residues 45-88 (AKACTPRLHDCSHDRHSCCRGELFKDVCYCFYPEGEDITEVCSC). 4 disulfide bridges follow: Cys-48/Cys-63, Cys-55/Cys-72, Cys-62/Cys-88, and Cys-74/Cys-86. Residues 89–108 (QQPKSHKYIEKVVDKAKTVV) are linear cationic cytotoxin domain.

The protein belongs to the neurotoxin 19 (CSTX) family. 05 (U4-Lctx) subfamily. As to expression, expressed by the venom gland.

Its subcellular location is the secreted. Functionally, enhances the high-affinity desensitization of human P2RX3 purinoceptors. In Lycosa singoriensis (Wolf spider), this protein is U4-lycotoxin-Ls1c.